The following is a 225-amino-acid chain: Membrane protein (225 aa).

The Virion surface portion of the chain corresponds to 1–20 (MSNETNCTLDFEQSVELFKE). A helical transmembrane segment spans residues 21 to 41 (YNLFITAFLLFLTIILQYGYA). Residues 42-51 (TRSKFIYILK) lie on the Intravirion side of the membrane. The chain crosses the membrane as a helical span at residues 52–72 (MIVLWCFWPLNIAVGVISCIY). The Virion surface portion of the chain corresponds to 73–77 (PPNTG). A helical membrane pass occupies residues 78 to 98 (GLVAAIILTVFACLSFVGYWI). Over 99–225 (QSIRLFKRCR…VATGGSSLYT (127 aa)) the chain is Intravirion.

Belongs to the gammacoronaviruses M protein family. As to quaternary structure, homomultimer. Interacts with envelope E protein in the budding compartment of the host cell, which is located between endoplasmic reticulum and the Golgi complex. Forms a complex with HE and S proteins. Interacts with nucleocapsid N protein. This interaction probably participates in RNA packaging into the virus.

Its subcellular location is the virion membrane. The protein resides in the host Golgi apparatus membrane. In terms of biological role, component of the viral envelope that plays a central role in virus morphogenesis and assembly via its interactions with other viral proteins. The chain is Membrane protein from Gallus gallus (Chicken).